A 635-amino-acid polypeptide reads, in one-letter code: Very-long-chain aldehyde decarbonylase GL1-6 (635 aa).

The next 4 membrane-spanning stretches (helical) occupy residues leucine 46 to isoleucine 66, isoleucine 100 to alanine 120, glycine 127 to histidine 147, and valine 183 to serine 203. In terms of domain architecture, Fatty acid hydroxylase spans valine 139–threonine 273.

This sequence belongs to the sterol desaturase family. Homodimer. In terms of tissue distribution, expressed in germinating seeds and shoots.

It is found in the endoplasmic reticulum membrane. It carries out the reaction a long-chain fatty aldehyde + 2 NADPH + O2 + H(+) = a long-chain alkane + formate + 2 NADP(+) + H2O. Its function is as follows. Aldehyde decarbonylase involved in the conversion of aldehydes to alkanes. Core component of a very-long-chain alkane synthesis complex. The polypeptide is Very-long-chain aldehyde decarbonylase GL1-6 (Oryza sativa subsp. japonica (Rice)).